The chain runs to 402 residues: Tyrosine--tRNA ligase (402 aa).

A 'HIGH' region motif is present at residues 47–56 (PTAPDLHLGH). A 'KMSKS' region motif is present at residues 232–236 (KMSKS). Residue lysine 235 participates in ATP binding. In terms of domain architecture, S4 RNA-binding spans 341–401 (VGVLDVLKQI…GKKRFMKLNI (61 aa)).

The protein belongs to the class-I aminoacyl-tRNA synthetase family. TyrS type 2 subfamily. As to quaternary structure, homodimer.

It is found in the cytoplasm. The enzyme catalyses tRNA(Tyr) + L-tyrosine + ATP = L-tyrosyl-tRNA(Tyr) + AMP + diphosphate + H(+). Catalyzes the attachment of tyrosine to tRNA(Tyr) in a two-step reaction: tyrosine is first activated by ATP to form Tyr-AMP and then transferred to the acceptor end of tRNA(Tyr). This Helicobacter pylori (strain J99 / ATCC 700824) (Campylobacter pylori J99) protein is Tyrosine--tRNA ligase.